The sequence spans 487 residues: Cytochrome c-552 (487 aa).

A signal peptide spans 1-27 (MSKKWTRNTAAMAAILSALCLSTNALA). Histidine 104 contributes to the heme c binding site. Residues cysteine 132, cysteine 135, and lysine 136 each coordinate heme. Cysteine 170, cysteine 173, histidine 174, cysteine 219, cysteine 222, and histidine 223 together coordinate heme c. Glutamate 225, tyrosine 226, lysine 271, and glutamine 273 together coordinate Ca(2+). Residue tyrosine 226 coordinates substrate. Histidine 274 lines the substrate pocket. Residues histidine 285, cysteine 292, cysteine 295, histidine 296, histidine 311, cysteine 324, cysteine 327, histidine 328, and histidine 403 each coordinate heme c.

The protein belongs to the cytochrome c-552 family. It depends on Ca(2+) as a cofactor. Heme c is required as a cofactor.

It is found in the periplasm. The enzyme catalyses 6 Fe(III)-[cytochrome c] + NH4(+) + 2 H2O = 6 Fe(II)-[cytochrome c] + nitrite + 8 H(+). It participates in nitrogen metabolism; nitrate reduction (assimilation). In terms of biological role, catalyzes the reduction of nitrite to ammonia, consuming six electrons in the process. This is Cytochrome c-552 from Photobacterium profundum (strain SS9).